A 180-amino-acid polypeptide reads, in one-letter code: Protein GrpE (180 aa).

Residues 1 to 19 (MAEKKRAQEQEKVQEDQKM) are compositionally biased toward basic and acidic residues. Residues 1-25 (MAEKKRAQEQEKVQEDQKMQNEQNE) are disordered.

This sequence belongs to the GrpE family. As to quaternary structure, homodimer.

Its subcellular location is the cytoplasm. Functionally, participates actively in the response to hyperosmotic and heat shock by preventing the aggregation of stress-denatured proteins, in association with DnaK and GrpE. It is the nucleotide exchange factor for DnaK and may function as a thermosensor. Unfolded proteins bind initially to DnaJ; upon interaction with the DnaJ-bound protein, DnaK hydrolyzes its bound ATP, resulting in the formation of a stable complex. GrpE releases ADP from DnaK; ATP binding to DnaK triggers the release of the substrate protein, thus completing the reaction cycle. Several rounds of ATP-dependent interactions between DnaJ, DnaK and GrpE are required for fully efficient folding. This chain is Protein GrpE, found in Nitratiruptor sp. (strain SB155-2).